The sequence spans 271 residues: Glutamate racemase (271 aa).

Substrate contacts are provided by residues 10 to 11 (DS) and 42 to 43 (YG). Catalysis depends on C73, which acts as the Proton donor/acceptor. 74-75 (NT) lines the substrate pocket. The Proton donor/acceptor role is filled by C183. 184–185 (TH) is a substrate binding site.

It belongs to the aspartate/glutamate racemases family.

The catalysed reaction is L-glutamate = D-glutamate. It functions in the pathway cell wall biogenesis; peptidoglycan biosynthesis. In terms of biological role, provides the (R)-glutamate required for cell wall biosynthesis. In Lactococcus lactis subsp. cremoris (strain SK11), this protein is Glutamate racemase.